We begin with the raw amino-acid sequence, 354 residues long: Uroporphyrinogen decarboxylase (354 aa).

Substrate is bound by residues 27 to 31 (RQAGR), D77, Y154, T209, and H327.

The protein belongs to the uroporphyrinogen decarboxylase family. As to quaternary structure, homodimer.

Its subcellular location is the cytoplasm. The catalysed reaction is uroporphyrinogen III + 4 H(+) = coproporphyrinogen III + 4 CO2. It participates in porphyrin-containing compound metabolism; protoporphyrin-IX biosynthesis; coproporphyrinogen-III from 5-aminolevulinate: step 4/4. Its function is as follows. Catalyzes the decarboxylation of four acetate groups of uroporphyrinogen-III to yield coproporphyrinogen-III. In Salmonella paratyphi B (strain ATCC BAA-1250 / SPB7), this protein is Uroporphyrinogen decarboxylase.